A 245-amino-acid chain; its full sequence is tRNA pseudouridine synthase A (245 aa).

The Nucleophile role is filled by Asp-52. Residue Tyr-112 coordinates substrate.

The protein belongs to the tRNA pseudouridine synthase TruA family. Homodimer.

It catalyses the reaction uridine(38/39/40) in tRNA = pseudouridine(38/39/40) in tRNA. Its function is as follows. Formation of pseudouridine at positions 38, 39 and 40 in the anticodon stem and loop of transfer RNAs. The polypeptide is tRNA pseudouridine synthase A (Dictyoglomus thermophilum (strain ATCC 35947 / DSM 3960 / H-6-12)).